We begin with the raw amino-acid sequence, 84 residues long: MDDFLEHLSKDDNKAWYGAEETERAAKLDAIETLLITDSVLKRNDVKKREKYLDLIENSGNNNGKIFVLSTSKITVSNLTNQQI.

This sequence belongs to the eukaryotic release factor 1 family. Pelota subfamily. Highly divergent.

This Saccharomyces cerevisiae (strain ATCC 204508 / S288c) (Baker's yeast) protein is Putative pelota-like protein YCL001W-B.